The primary structure comprises 491 residues: Probable cytosol aminopeptidase (491 aa).

2 residues coordinate Mn(2+): Lys261 and Asp266. Lys273 is an active-site residue. Mn(2+) is bound by residues Asp284, Asp343, and Glu345. The active site involves Arg347.

This sequence belongs to the peptidase M17 family. Mn(2+) serves as cofactor.

The protein resides in the cytoplasm. The catalysed reaction is Release of an N-terminal amino acid, Xaa-|-Yaa-, in which Xaa is preferably Leu, but may be other amino acids including Pro although not Arg or Lys, and Yaa may be Pro. Amino acid amides and methyl esters are also readily hydrolyzed, but rates on arylamides are exceedingly low.. The enzyme catalyses Release of an N-terminal amino acid, preferentially leucine, but not glutamic or aspartic acids.. In terms of biological role, presumably involved in the processing and regular turnover of intracellular proteins. Catalyzes the removal of unsubstituted N-terminal amino acids from various peptides. The protein is Probable cytosol aminopeptidase of Geobacter sp. (strain M21).